The primary structure comprises 623 residues: Quinoprotein ethanol dehydrogenase (623 aa).

Positions 1 to 34 (MTTRTSPAPAGLLRPSLHCLAFAVALGSAGAALA) are cleaved as a signal peptide. The Ca(2+) site is built by Asp-45, Thr-48, and Asp-51. Glu-95 lines the pyrroloquinoline quinone pocket. The cysteines at positions 139 and 140 are disulfide-linked. Pyrroloquinoline quinone is bound by residues Arg-145, Thr-189, and 207-209 (HGS). A Ca(2+)-binding site is contributed by Glu-213. Residues 244–281 (LNGKDSTVTGDVKAPSWPDDRNSPTGKVESWSHGGGAP) form a disordered region. The Ca(2+) site is built by Asn-300 and Asp-350. Asp-350 functions as the Proton acceptor in the catalytic mechanism. Residue Arg-378 coordinates pyrroloquinoline quinone. The segment at 413-434 (GRPVEREGQRPPLPEPGQKHGK) is disordered. Pyrroloquinoline quinone-binding residues include Trp-523 and Ala-587.

It belongs to the bacterial PQQ dehydrogenase family. Homodimer. Interacts with cytochrome c550. It depends on pyrroloquinoline quinone as a cofactor. Requires Ca(2+) as cofactor. Post-translationally, the disulfide ring formed between the two adjacent cysteine residues Cys-139 and Cys-140 is essential for efficient electron transfer at pH 7 from QEDH to its natural electron acceptor cytochrome c550.

Its subcellular location is the periplasm. The catalysed reaction is a primary alcohol + 2 Fe(III)-[cytochrome c] = an aldehyde + 2 Fe(II)-[cytochrome c] + 2 H(+). It catalyses the reaction ethanol + 2 Fe(III)-[cytochrome c] = acetaldehyde + 2 Fe(II)-[cytochrome c] + 2 H(+). The enzyme catalyses butan-1-ol + 2 Fe(III)-[cytochrome c] = butanal + 2 Fe(II)-[cytochrome c] + 2 H(+). It carries out the reaction propan-2-ol + 2 Fe(III)-[cytochrome c] = acetone + 2 Fe(II)-[cytochrome c] + 2 H(+). The catalysed reaction is 1-propanol + 2 Fe(III)-[cytochrome c] = propanal + 2 Fe(II)-[cytochrome c] + 2 H(+). It functions in the pathway alcohol metabolism; ethanol degradation; acetate from ethanol: step 1/2. With respect to regulation, inhibited by cyclopropanone ethylhemiketal. Activated by ammonia (500mM), methylamine (5mM), ethylamine (5mM), octylamine (5mM), ethanolamine (5mM) and 1-amino-2-propanol (5mM), in assays using artificial electron acceptors. Ammonia is not needed for, nor does it stimulate, the ethanol-oxidizing activity when using the natural electron acceptor cytochrome c550. Functionally, catalyzes the oxidation of ethanol and other primary alcohols to the corresponding aldehydes, except methanol, which is a very poor substrate. Uses a specific inducible cytochrome c550, encoded by the adjacent gene in the locus, as electron acceptor. Is a key enzyme of the carbon and energy metabolism during growth of P.aeruginosa on ethanol as the sole carbon and energy source. Is also able to use secondary alcohols as well as aminoalcohols like ethanolamine and 1-amino-2-propanol, and aldehydes as substrates. The sequence is that of Quinoprotein ethanol dehydrogenase from Pseudomonas aeruginosa (strain ATCC 15692 / DSM 22644 / CIP 104116 / JCM 14847 / LMG 12228 / 1C / PRS 101 / PAO1).